Here is a 782-residue protein sequence, read N- to C-terminus: Structure-specific endonuclease subunit SLX4 (782 aa).

Disordered stretches follow at residues 63–91 and 359–425; these read TPKPVKVSRPGLRKTGSRKSKKNQSMSAM and KEHE…KKSK. Residues 73-84 show a composition bias toward basic residues; it reads GLRKTGSRKSKK. Positions 374-388 are enriched in polar residues; sequence PAQSLTQSQVPSSID.

Belongs to the SLX4 family. In terms of assembly, forms a heterodimer with SLX1. Phosphorylated in response to DNA damage.

The protein resides in the nucleus. In terms of biological role, regulatory subunit of the SLX1-SLX4 structure-specific endonuclease that resolves DNA secondary structures generated during DNA repair and recombination. Has endonuclease activity towards branched DNA substrates, introducing single-strand cuts in duplex DNA close to junctions with ss-DNA. This chain is Structure-specific endonuclease subunit SLX4, found in Scheffersomyces stipitis (strain ATCC 58785 / CBS 6054 / NBRC 10063 / NRRL Y-11545) (Yeast).